A 477-amino-acid chain; its full sequence is MSAAPGLLHQELSCPLCLQLFDAPVTAECGHSFCRACLGRVAGEPAADGTVLCPCCQAPTRPQALSTNLQLARLVEGLAQVPQGHCEEHLDPLSIYCEQDRALVCGVCASLGSHRGHRLLPAAEAHARLKTQLPQQKLQLQEACMRKEKSVAVLEHQLVEVEETVRQFRGAVGEQLGKMRVFLAALEGSLDREAERVRGEAGVALRRELGSLNSYLEQLRQMEKVLEEVADKPQTEFLMKYCLVTSRLQKILAESPPPARLDIQLPIISDDFKFQVWRKMFRALMPALEELTFDPSSAHPSLVVSSSGRRVECSEQKAPPAGEDPRQFDKAVAVVAHQQLSEGEHYWEVDVGDKPRWALGVIAAEAPRRGRLHAVPSQGLWLLGLREGKILEAHVEAKEPRALRSPERRPTRIGLYLSFGDGVLSFYDASDADALVPLFAFHERLPRPVYPFFDVCWHDKGKNAQPLLLVGPEGAEA.

Zn(2+) is bound by residues C14, C17, C29, H31, C34, C37, C53, C56, C86, H89, C97, D100, C105, C108, H114, and H117. Residues 14 to 57 form an RING-type zinc finger; that stretch reads CPLCLQLFDAPVTAECGHSFCRACLGRVAGEPAADGTVLCPCCQ. The segment at 81–122 adopts a B box-type zinc-finger fold; the sequence is VPQGHCEEHLDPLSIYCEQDRALVCGVCASLGSHRGHRLLPA. Residues 135–232 are a coiled coil; sequence QQKLQLQEAC…EKVLEEVADK (98 aa). C144 bears the S-nitrosocysteine mark. Position 255 is a phosphoserine (S255). The B30.2/SPRY domain occupies 271–475; the sequence is DFKFQVWRKM…PLLLVGPEGA (205 aa).

The protein belongs to the TRIM/RBCC family. As to quaternary structure, homodimer. Homooligomer; disulfide-linked. Oligomerizes on the phospholipid membrane. Interacts with DYSF and CAV3. Disulfide bond formation at Cys-242 occurs in case of membrane damage that cause the entry of the oxidized milieu of the extracellular space, resulting in homooligomerization. Post-translationally, S-nitrosylation at Cys-144 stabilizes TRIM72 and protects against oxidation-induced protein degradation and cell death.

Its subcellular location is the cell membrane. It localises to the sarcolemma. The protein resides in the cytoplasmic vesicle membrane. It carries out the reaction S-ubiquitinyl-[E2 ubiquitin-conjugating enzyme]-L-cysteine + [acceptor protein]-L-lysine = [E2 ubiquitin-conjugating enzyme]-L-cysteine + N(6)-ubiquitinyl-[acceptor protein]-L-lysine.. The protein operates within protein modification; protein ubiquitination. Specifically binds phosphatidylserine. The binding to phospholipids enhances ubiquitination activity. Muscle-specific E3 ubiquitin-protein ligase that plays a central role in cell membrane repair by nucleating the assembly of the repair machinery at injury sites. Its ubiquitination activity is mediated by E2 ubiquitin-conjugating enzymes UBE2D1, UBE2D2 and UBE2D3. Acts as a sensor of oxidation: upon membrane damage, entry of extracellular oxidative environment results in disulfide bond formation and homooligomerization at the injury site. This oligomerization acts as a nucleation site for recruitment of TRIM72-containing vesicles to the injury site, leading to membrane patch formation. Probably acts upstream of the Ca(2+)-dependent membrane resealing process. Required for transport of DYSF to sites of cell injury during repair patch formation. Regulates membrane budding and exocytosis. May be involved in the regulation of the mobility of KCNB1-containing endocytic vesicles. This Homo sapiens (Human) protein is Tripartite motif-containing protein 72.